Consider the following 244-residue polypeptide: Small ribosomal subunit protein eS4 (244 aa).

The region spanning 43–106 (LPLLLVVRDV…DENYLVLFDE (64 aa)) is the S4 RNA-binding domain.

This sequence belongs to the eukaryotic ribosomal protein eS4 family.

In Methanococcus maripaludis (strain C5 / ATCC BAA-1333), this protein is Small ribosomal subunit protein eS4.